Reading from the N-terminus, the 513-residue chain is Protein CYCLOPS (513 aa).

Disordered regions lie at residues 329–380 (QGRT…STQN) and 395–435 (DDRK…AEAK). Positions 333–347 (ASGEPSQSESSAAAP) are enriched in low complexity. Over residues 359-380 (PSNSNQTLGDSSWKQVGESTQN) the composition is skewed to polar residues. 2 short sequence motifs (nuclear localization signal) span residues 397–400 (RKRK) and 421–424 (KKRR). Residues 447-513 (MQAILKRCEN…ERILSETGKI (67 aa)) adopt a coiled-coil conformation.

Belongs to the CYCLOPS family. As to quaternary structure, forms homodimers. Interacts with CCAMK. As to expression, highly expressed in roots. Expressed in root hairs and nodules. Not detected in leaves or flowers.

The protein localises to the nucleus. Functionally, involved symbiotic signaling. Required for root infection by symbiotic rhizobia, infection thread (IT) formation, and nodule development. Required for proper induction of early nodulin gene expression. Probably not involved in nodule organogenesis. Involved in arbuscular mycorrhizal (AM) symbiosis. Required for fungal infection of the outer cortical cell layers, and for arbuscule development during the AM symbiosis. Acts downstream of CCAMK. Required for symbiosome formation (i.e. the release of the bacteria from the ITs) and subsequent symbiosome development. Required for the expression of the nodule-specific RPG gene, which controls proper IT growth and is essential for symbiosome formation. Acts upstream of ERN1, a transcriptional regulator required for nodulation. In Medicago truncatula (Barrel medic), this protein is Protein CYCLOPS.